The primary structure comprises 529 residues: hal-like protein DDB_G0273787/DDB_G0273081 (529 aa).

The segment at residues A151–G153 is a cross-link (5-imidazolinone (Ala-Gly)). 2,3-didehydroalanine (Ser) is present on S152.

This sequence belongs to the PAL/histidase family. Post-translationally, contains an active site 4-methylidene-imidazol-5-one (MIO), which is formed autocatalytically by cyclization and dehydration of residues Ala-Ser-Gly.

Its subcellular location is the cytoplasm. The enzyme catalyses L-histidine = trans-urocanate + NH4(+). It participates in amino-acid degradation; L-histidine degradation into L-glutamate; N-formimidoyl-L-glutamate from L-histidine: step 1/3. This Dictyostelium discoideum (Social amoeba) protein is hal-like protein DDB_G0273787/DDB_G0273081.